Here is an 84-residue protein sequence, read N- to C-terminus: Small ribosomal subunit protein bS18 (84 aa).

This sequence belongs to the bacterial ribosomal protein bS18 family. As to quaternary structure, part of the 30S ribosomal subunit. Forms a tight heterodimer with protein bS6.

Its function is as follows. Binds as a heterodimer with protein bS6 to the central domain of the 16S rRNA, where it helps stabilize the platform of the 30S subunit. The polypeptide is Small ribosomal subunit protein bS18 (Maricaulis maris (strain MCS10) (Caulobacter maris)).